The primary structure comprises 274 residues: MAVIKLKPTTPGQRGTVKVTRDHLHKGAGFAPLLEPQHQKSGRNNNGHITTRHKGGGHKHHYRVVDFKRTKDGIPAKVERIEYDPNRTAHIALVCYADGERRYIIAPRNLEVGATIVSGSEAPIRVGNTLPIRNIPVGSTIHCIELKIGAGAQIARSAGTSATLLAREGIYAQVRMRSGEVRKVHIECRATIGEVANEEHSLRRLGKAGVKRWMGIRPTVRGVVMNPVDHPHGGGEGKTGEGRHAVDPWGNLTKGYRTRNNKRTQSMIVSRRKK.

2 disordered regions span residues 35-60 and 224-274; these read EPQH…GHKH and VMNP…RRKK. The span at 50 to 60 shows a compositional bias: basic residues; it reads TTRHKGGGHKH. Basic and acidic residues predominate over residues 229–246; sequence DHPHGGGEGKTGEGRHAV.

Belongs to the universal ribosomal protein uL2 family. In terms of assembly, part of the 50S ribosomal subunit. Forms a bridge to the 30S subunit in the 70S ribosome.

Its function is as follows. One of the primary rRNA binding proteins. Required for association of the 30S and 50S subunits to form the 70S ribosome, for tRNA binding and peptide bond formation. It has been suggested to have peptidyltransferase activity; this is somewhat controversial. Makes several contacts with the 16S rRNA in the 70S ribosome. This Delftia acidovorans (strain DSM 14801 / SPH-1) protein is Large ribosomal subunit protein uL2.